The following is a 443-amino-acid chain: Spermidine hydroxycinnamoyltransferase 1 (443 aa).

Active-site proton acceptor residues include H167 and D390.

Belongs to the plant acyltransferase family.

Hydroxycinnamoyl transferase that catalyzes the transfer of an acyl from p-coumaryol-CoA to spermidine, to produce coumaroyl spermidine. Can use feruloyl-CoA as acyl donor. Contributes to the natural variation of spermidine-based phenolamides in rice cultivars. The polypeptide is Spermidine hydroxycinnamoyltransferase 1 (Oryza sativa subsp. japonica (Rice)).